The sequence spans 492 residues: Adenosylhomocysteinase-like 2 (492 aa).

The disordered stretch occupies residues 43–64 (FTGSSDEEDVSPKDNHQRNSAG). 2 residues coordinate substrate: aspartate 192 and glutamate 217. 218-220 (SVT) is a binding site for NAD(+). Lysine 247 and aspartate 251 together coordinate substrate. NAD(+)-binding positions include 283 to 288 (GDVGKG), glutamate 304, 360 to 362 (MGH), asparagine 407, lysine 486, 486 to 490 (KANYY), and tyrosine 490.

The protein belongs to the adenosylhomocysteinase family. NAD(+) is required as a cofactor.

Functionally, might play a role in the regulation of methionine metabolism. The polypeptide is Adenosylhomocysteinase-like 2 (Drosophila melanogaster (Fruit fly)).